A 223-amino-acid chain; its full sequence is GTP cyclohydrolase 1 (223 aa).

Zn(2+) contacts are provided by Cys114, His117, and Cys185.

The protein belongs to the GTP cyclohydrolase I family. As to quaternary structure, homomer.

The catalysed reaction is GTP + H2O = 7,8-dihydroneopterin 3'-triphosphate + formate + H(+). It functions in the pathway cofactor biosynthesis; 7,8-dihydroneopterin triphosphate biosynthesis; 7,8-dihydroneopterin triphosphate from GTP: step 1/1. The chain is GTP cyclohydrolase 1 from Chlorobium phaeovibrioides (strain DSM 265 / 1930) (Prosthecochloris vibrioformis (strain DSM 265)).